Consider the following 197-residue polypeptide: Holliday junction branch migration complex subunit RuvA (197 aa).

The segment at 1–63 (MFEYLNGKLV…EDAHSLYGFV (63 aa)) is domain I. Residues 64–142 (NESEKALFLR…ATGAVGISLL (79 aa)) are domain II. The tract at residues 142–146 (LDAAP) is flexible linker. The segment at 147–197 (ASNLALEEAIEALQALGYKATELKKIEKKLAQEAGLTSEEYIKSALKLMMK) is domain III.

It belongs to the RuvA family. In terms of assembly, homotetramer. Forms an RuvA(8)-RuvB(12)-Holliday junction (HJ) complex. HJ DNA is sandwiched between 2 RuvA tetramers; dsDNA enters through RuvA and exits via RuvB. An RuvB hexamer assembles on each DNA strand where it exits the tetramer. Each RuvB hexamer is contacted by two RuvA subunits (via domain III) on 2 adjacent RuvB subunits; this complex drives branch migration. In the full resolvosome a probable DNA-RuvA(4)-RuvB(12)-RuvC(2) complex forms which resolves the HJ.

It localises to the cytoplasm. In terms of biological role, the RuvA-RuvB-RuvC complex processes Holliday junction (HJ) DNA during genetic recombination and DNA repair, while the RuvA-RuvB complex plays an important role in the rescue of blocked DNA replication forks via replication fork reversal (RFR). RuvA specifically binds to HJ cruciform DNA, conferring on it an open structure. The RuvB hexamer acts as an ATP-dependent pump, pulling dsDNA into and through the RuvAB complex. HJ branch migration allows RuvC to scan DNA until it finds its consensus sequence, where it cleaves and resolves the cruciform DNA. The chain is Holliday junction branch migration complex subunit RuvA from Lactococcus lactis subsp. cremoris (strain MG1363).